Consider the following 615-residue polypeptide: Integral inner nuclear membrane protein ima1 (615 aa).

Helical transmembrane passes span 192-212 (FVLW…SIVW), 247-267 (IFYF…WYKM), and 323-343 (QIHA…ISCL). The disordered stretch occupies residues 357–387 (ILKPRKKRQESTSSVHRIGKESSDRKDGISG). A compositionally biased stretch (basic and acidic residues) spans 374–384 (IGKESSDRKDG). 2 helical membrane-spanning segments follow: residues 563 to 583 (AKLL…GWRL) and 586 to 606 (FTMF…VMKH).

The protein resides in the nucleus inner membrane. In terms of biological role, inner nuclear membrane protein that specifically binds to heterochromatic regions and promotes the tethering of centromeric DNA to the SUN-KASH complex. Couples centromeres to the nuclear envelope, thus contributing to their association with the microtubule organizing center attachment site and to the positioning of the nucleus at the cell center by microtubules. In Schizosaccharomyces pombe (strain 972 / ATCC 24843) (Fission yeast), this protein is Integral inner nuclear membrane protein ima1 (IMA1).